A 330-amino-acid chain; its full sequence is Olfactory receptor 11H6 (330 aa).

The Extracellular portion of the chain corresponds to 1-43; sequence MFFIIHSLVTSVFLTALGPQNRTMHFVTEFVLLGFHGQREMQS. An N-linked (GlcNAc...) asparagine glycan is attached at Asn21. Residues 44-64 form a helical membrane-spanning segment; that stretch reads CFFSFILVLYLLTLLGNGAIV. At 65–72 the chain is on the cytoplasmic side; sequence CAVKLDRR. A helical transmembrane segment spans residues 73 to 93; sequence LHTPMYILLGNFAFLEIWYIS. The Extracellular segment spans residues 94-117; it reads STVPNMLVNILSEIKTISFSGCFL. Cys115 and Cys207 form a disulfide bridge. Residues 118–138 traverse the membrane as a helical segment; that stretch reads QFYFFFSLGTTECFFLSVMAY. At 139-157 the chain is on the cytoplasmic side; the sequence is DRYLAICRPLHYPSIMTGK. Residues 158-178 traverse the membrane as a helical segment; that stretch reads FCIILVCVCWVGGFLCYPVPI. Residues 179–215 lie on the Extracellular side of the membrane; that stretch reads VLISQLPFCGPNIIDHLVCDPGPLFALACISAPSTEL. The helical transmembrane segment at 216-235 threads the bilayer; it reads ICYTFNSMIIFGPFLSILGS. At 236 to 255 the chain is on the cytoplasmic side; sequence YTLVIRAVLCIPSGAGRTKA. Residues 256–276 form a helical membrane-spanning segment; the sequence is FSTCGSHLMVVSLFYGTLMVM. The Extracellular portion of the chain corresponds to 277–289; that stretch reads YVSPTSGNPAGMQ. The helical transmembrane segment at 290–310 threads the bilayer; that stretch reads KIITLVYTAMTPFLNPLIYSL. Over 311-330 the chain is Cytoplasmic; that stretch reads RNKDMKDALKRVLGLTVSQN.

It belongs to the G-protein coupled receptor 1 family.

The protein localises to the cell membrane. Functionally, odorant receptor. In Homo sapiens (Human), this protein is Olfactory receptor 11H6 (OR11H6).